We begin with the raw amino-acid sequence, 661 residues long: Heme transporter BhuA (661 aa).

The first 23 residues, 1-23, serve as a signal peptide directing secretion; that stretch reads MKFTRTLVLASTFLLATVATSQA. One can recognise a TBDR plug domain in the interval 48 to 159; it reads KDNIEATGGT…AAGAIRYETV (112 aa). Positions 170-661 constitute a TBDR beta-barrel domain; it reads TFGARIIGSY…TFTFQTAFKF (492 aa).

Belongs to the TonB-dependent receptor family.

Its subcellular location is the cell outer membrane. Functionally, heme transporter. The chain is Heme transporter BhuA (bhuA) from Brucella suis biovar 1 (strain 1330).